Here is a 1892-residue protein sequence, read N- to C-terminus: Plexin A3 (1892 aa).

The signal sequence occupies residues 1–20 (MRSLWLLVFSFSVLTGTNMA). Positions 21–509 (FPMILSERPE…SDKQVSRLPV (489 aa)) constitute a Sema domain. The Extracellular portion of the chain corresponds to 21-1240 (FPMILSERPE…IYSDSTLTLP (1220 aa)). Asn-68 carries an N-linked (GlcNAc...) asparagine glycan. Intrachain disulfides connect Cys-86–Cys-95, Cys-121–Cys-129, Cys-283–Cys-404, Cys-299–Cys-355, Cys-373–Cys-392, Cys-512–Cys-529, Cys-518–Cys-560, Cys-521–Cys-538, and Cys-532–Cys-544. The N-linked (GlcNAc...) asparagine glycan is linked to Asn-569. An intrachain disulfide couples Cys-595 to Cys-615. IPT/TIG domains are found at residues 861–955 (PRIT…YSFV), 957–1041 (PSFS…YIYT), 1044–1143 (PNIS…FTYY), and 1146–1232 (PTFE…LHIY). An N-linked (GlcNAc...) asparagine glycan is attached at Asn-1183. Residues 1241-1261 (AIIGIGAGGGVLLIAIIAVLI) form a helical membrane-spanning segment. Residues 1262–1315 (AYKRKTRDADRTLKRLQLQMDNLESRVALECKEAFAELQTDIQELTNDMDGVKI) are a coiled coil. Over 1262–1892 (AYKRKTRDAD…QAINLMSGSS (631 aa)) the chain is Cytoplasmic.

This sequence belongs to the plexin family. As to expression, detected in primary motor neurons in the embryonic nervous system.

It is found in the cell membrane. In terms of biological role, coreceptor for class 3 semaphorins. Necessary for signaling by class 3 semaphorins and subsequent remodeling of the cytoskeleton. Plays a role in axon guidance in the developing nervous system. Class 3 semaphorins bind to a complex composed of a neuropilin and a plexin. The plexin modulates the affinity of the complex for specific semaphorins, and its cytoplasmic domain is required for the activation of down-stream signaling events in the cytoplasm. In Danio rerio (Zebrafish), this protein is Plexin A3 (plxna3).